The following is a 131-amino-acid chain: Glycine cleavage system H protein (131 aa).

Residues 24–106 (RAIVGISDHA…YGEGWIMVIE (83 aa)) form the Lipoyl-binding domain. N6-lipoyllysine is present on Lys65.

It belongs to the GcvH family. As to quaternary structure, the glycine cleavage system is composed of four proteins: P, T, L and H. It depends on (R)-lipoate as a cofactor.

Its function is as follows. The glycine cleavage system catalyzes the degradation of glycine. The H protein shuttles the methylamine group of glycine from the P protein to the T protein. The sequence is that of Glycine cleavage system H protein from Xylella fastidiosa (strain 9a5c).